Here is a 139-residue protein sequence, read N- to C-terminus: Large ribosomal subunit protein uL24 (139 aa).

Positions 1-25 are disordered; the sequence is MKRNTNVSSSRRKSRKAHFTASSGE.

Belongs to the universal ribosomal protein uL24 family.

This is Large ribosomal subunit protein uL24 (rpl26) from Dictyostelium discoideum (Social amoeba).